A 445-amino-acid polypeptide reads, in one-letter code: Exodeoxyribonuclease 7 large subunit (445 aa).

It belongs to the XseA family. In terms of assembly, heterooligomer composed of large and small subunits.

The protein localises to the cytoplasm. It carries out the reaction Exonucleolytic cleavage in either 5'- to 3'- or 3'- to 5'-direction to yield nucleoside 5'-phosphates.. Its function is as follows. Bidirectionally degrades single-stranded DNA into large acid-insoluble oligonucleotides, which are then degraded further into small acid-soluble oligonucleotides. This chain is Exodeoxyribonuclease 7 large subunit, found in Xanthomonas oryzae pv. oryzae (strain PXO99A).